Consider the following 57-residue polypeptide: UPF0391 membrane protein Nham_2738 (57 aa).

2 helical membrane-spanning segments follow: residues 4-24 (WVVTFLIIALIAGILGFGGLA) and 30-50 (IAKIIFFIAVILFVVSAVVGL).

Belongs to the UPF0391 family.

The protein resides in the cell membrane. This Nitrobacter hamburgensis (strain DSM 10229 / NCIMB 13809 / X14) protein is UPF0391 membrane protein Nham_2738.